We begin with the raw amino-acid sequence, 606 residues long: Mitogen-activated protein kinase kinase kinase 7 (606 aa).

The segment at 1 to 300 (MSTASAASSS…FPGADEPLQY (300 aa)) is interaction with MAPK8IP1. In terms of domain architecture, Protein kinase spans 36-291 (IEVEEVVGRG…KIMTHLMRYF (256 aa)). Residues 42–50 (VGRGAFGVV) and Lys-63 contribute to the ATP site. A Glycyl lysine isopeptide (Lys-Gly) (interchain with G-Cter in ubiquitin) cross-link involves residue Lys-72. Residue Asp-156 is the Proton acceptor of the active site. A Glycyl lysine isopeptide (Lys-Gly) (interchain with G-Cter in ubiquitin) cross-link involves residue Lys-158. (Microbial infection) O-acetylthreonine; by Yersinia YopJ; alternate is present on residues Thr-184 and Thr-187. A phosphothreonine; by autocatalysis; alternate mark is found at Thr-184 and Thr-187. The residue at position 192 (Ser-192) is a Phosphoserine; by autocatalysis. Lys-209 participates in a covalent cross-link: Glycyl lysine isopeptide (Lys-Gly) (interchain with G-Cter in ubiquitin). Residues 301 to 338 (PCQYSDEGQSNSATSTGSFMDIASTNTSNKSDTNMEQV) form a disordered region. The segment covering 306 to 338 (DEGQSNSATSTGSFMDIASTNTSNKSDTNMEQV) has biased composition (polar residues). (Microbial infection) O-acetylthreonine; by Yersinia YopJ; alternate is present on Thr-341. The interval 354–391 (KNQAKQQSESGRLSLGASRGSSVESLPPTSEGKRMSAD) is disordered. Residues 361 to 375 (SESGRLSLGASRGSS) are compositionally biased toward low complexity. Phosphoserine is present on residues Ser-367, Ser-389, and Ser-439. Polar residues predominate over residues 443–452 (LTVTGTEPGQ). Residues 443–493 (LTVTGTEPGQVSSRSSSPSVRMITTSGPTSEKPTRSHPWTPDDSTDTNGSD) form a disordered region. (Microbial infection) O-acetylthreonine; by Yersinia YopJ; alternate is present on residues Thr-444, Thr-446, and Thr-448. The span at 453 to 463 (VSSRSSSPSVR) shows a compositional bias: low complexity. Residue Ser-455 is modified to Phosphoserine. Positions 464–473 (MITTSGPTSE) are enriched in polar residues. The residue at position 467 (Thr-467) is a (Microbial infection) O-acetylthreonine; by Yersinia YopJ; alternate.

It belongs to the protein kinase superfamily. STE Ser/Thr protein kinase family. MAP kinase kinase kinase subfamily. Can form homodimer. Binds both upstream activators and downstream substrates in multimolecular complexes. Interacts with TAB1/MAP3K7IP1, TAB2/MAP3K7IP2 and TAB3/MAP3K7IP3. Identified in the TRIKA2 complex composed of MAP3K7/TAK1, TAB1/MAP3K7IP1 and TAB2/MAP3K7IP2. Interacts with PPM1L and PPM1B/PP2CB. Interaction with PP2A and PPP6C leads to its repressed activity. Interacts with TRAF6 and TAB1/MAP3K7IP1; during IL-1 signaling. Interacts with TAOK1 and TAOK2; interaction with TAOK2 interferes with MAP3K7 interaction with IKKA, thus preventing NF-kappa-B activation. Interacts with DYNC2I2 (via WD domains). Interacts with CYLD and RBCK1. Interacts with TGFBR1; induces MAP3K7/TAK1 activation by TRAF6. Interacts with MAPK8IP1 and SMAD6. Interacts with isoform 1 of VRK2. Interacts with DAB2; the interaction is induced by TGF-beta stimulation and may mediate TGF-beta stimulated JNK activation. Interacts with TRIM5. Part of a complex containing ITCH, NDFIP1 and MAP3K7. Interacts with IFIT5; the interaction synergizes the recruitment of IKK to MAP3K7 and enhances IKK phosphorylation. Interacts with PLEKHM1 (via N- and C-terminus). Interacts with TRIM8. Found in a complex with SH3RF1, RAC2, MAP2K7/MKK7, MAPK8IP1/JIP1, MAPK8/JNK1 and MAPK9/JNK2. Interacts with SASH1. Interacts with RIPK1. As to quaternary structure, (Microbial infection) Interacts with herpes simplex virus 2 protein US2; this interaction induces MAP3K7 phosphorylation and subsequent activation. Mg(2+) is required as a cofactor. Association with TAB1/MAP3K7IP1 promotes autophosphorylation at Ser-192 and subsequent activation. Association with TAB2/MAP3K7IP2, itself associated with free unanchored Lys-63 polyubiquitin chain, promotes autophosphorylation and subsequent activation of MAP3K7. Dephosphorylation at Ser-192 by PPM1B/PP2CB and at Thr-187 by PP2A and PPP6C leads to inactivation. In terms of processing, 'Lys-48'-linked polyubiquitination at Lys-72 is induced by TNFalpha, and leads to proteasomal degradation. Undergoes 'Lys-48'-linked polyubiquitination catalyzed by ITCH. Requires 'Lys-63'-linked polyubiquitination for autophosphorylation and subsequent activation. 'Lys-63'-linked ubiquitination does not lead to proteasomal degradation. Deubiquitinated by CYLD, a protease that selectively cleaves 'Lys-63'-linked ubiquitin chains. Deubiquitinated by Y.enterocolitica YopP. Deubiquitinated by USP19; leading to negative regulation of TNF-alpha- and IL-1beta-triggered NF-kappa-B activation. Post-translationally, (Microbial infection) Cleaved and inactivated by the proteases 3C of coxsackievirus A16 and human enterovirus D68, allowing the virus to disrupt TRAF6-triggered NF-kappa-B induction. (Microbial infection) Acetylation of Thr-184 and Thr-187 by Yersinia YopJ prevents phosphorylation and activation, thus blocking the MAPK signaling pathway. In terms of tissue distribution, isoform 1A is the most abundant in ovary, skeletal muscle, spleen and blood mononuclear cells. Isoform 1B is highly expressed in brain, kidney and small intestine. Isoform 1C is the major form in prostate. Isoform 1D is the less abundant form.

It localises to the cytoplasm. Its subcellular location is the cell membrane. It catalyses the reaction L-seryl-[protein] + ATP = O-phospho-L-seryl-[protein] + ADP + H(+). The enzyme catalyses L-threonyl-[protein] + ATP = O-phospho-L-threonyl-[protein] + ADP + H(+). Activated by pro-inflammatory cytokines and in response to physical and chemical stresses, including osmotic stress, oxidative stress, arsenic and ultraviolet light irradiation. Activated by 'Lys-63'-linked polyubiquitination and by autophosphorylation. Association with TAB1/MAP3K7IP1 and TAB2/MAP3K7IP2 promotes activation through autophosphorylation, whereas PPM1B/PP2CB, PP2A and PPP6C dephosphorylation leads to inactivation. Ceramides are also able to activate MAP3K7/TAK1. Serine/threonine kinase which acts as an essential component of the MAP kinase signal transduction pathway. Plays an important role in the cascades of cellular responses evoked by changes in the environment. Mediates signal transduction of TRAF6, various cytokines including interleukin-1 (IL-1), transforming growth factor-beta (TGFB), TGFB-related factors like BMP2 and BMP4, toll-like receptors (TLR), tumor necrosis factor receptor CD40 and B-cell receptor (BCR). Once activated, acts as an upstream activator of the MKK/JNK signal transduction cascade and the p38 MAPK signal transduction cascade through the phosphorylation and activation of several MAP kinase kinases like MAP2K1/MEK1, MAP2K3/MKK3, MAP2K6/MKK6 and MAP2K7/MKK7. These MAP2Ks in turn activate p38 MAPKs and c-jun N-terminal kinases (JNKs); both p38 MAPK and JNK pathways control the transcription factors activator protein-1 (AP-1). Independently of MAP2Ks and p38 MAPKs, acts as a key activator of NF-kappa-B by promoting activation of the I-kappa-B-kinase (IKK) core complex. Mechanistically, recruited to polyubiquitin chains of RIPK2 and IKBKG/NEMO via TAB2/MAP3K7IP2 and TAB3/MAP3K7IP3, and catalyzes phosphorylation and activation of IKBKB/IKKB component of the IKK complex, leading to NF-kappa-B activation. In osmotic stress signaling, plays a major role in the activation of MAPK8/JNK1, but not that of NF-kappa-B. Promotes TRIM5 capsid-specific restriction activity. Phosphorylates RIPK1 at 'Ser-321' which positively regulates RIPK1 interaction with RIPK3 to promote necroptosis but negatively regulates RIPK1 kinase activity and its interaction with FADD to mediate apoptosis. Phosphorylates STING1 in response to cGAMP-activation, promoting association between STEEP1 and STING1 and STING1 translocation to COPII vesicles. This Homo sapiens (Human) protein is Mitogen-activated protein kinase kinase kinase 7.